The primary structure comprises 109 residues: Polyprenyl transferase subC (109 aa).

2 consecutive transmembrane segments (helical) span residues 39–59 (LFCV…NDWI) and 84–104 (QAFV…HVML).

The protein belongs to the UbiA prenyltransferase family. Mg(2+) is required as a cofactor.

The protein resides in the membrane. The protein operates within secondary metabolite biosynthesis; terpenoid biosynthesis. In terms of biological role, polyprenyl transferase; part of the gene cluster that mediates the biosynthesis of the immunosuppressants subglutinols, meroterpenoids consisting of an alpha-pyrone (4-hydroxy-5,6-dimethyl-2-pyrone) moiety attached to a decalin core fused to a five-membered cyclic ether carrying a prenylside chain. The first step of the pathway is the synthesis of the alpha-pyrone moiety by the polyketide synthase subA via condensation of one acetyl-CoA starter unit with 3 malonyl-CoA units and 2 methylations. The alpha-pyrone is then combined with geranylgeranyl pyrophosphate (GGPP) formed by the GGPP synthase subD through the action of the prenyltransferase subC to yield a linear alpha-pyrone diterpenoid. Subsequent steps in the subglutinol biosynthetic pathway involve the decalin core formation, which is thought to be initiated by the epoxidation of the C10-C11 olefin by the FAD-dependent oxidoreductase subE. The following cyclization cascade would be catalyzed by the terpene cyclase subB. Lastly, the FAD-dependent dehydrogenase subF probably catalyzes the five-membered cyclic ether formation to complete the formation of subglutinol A. Subsequent redox reactions appear to give rise to subglutinol C and D, however, it remains unclear which enzymes are responsible for these transformations. SubD may have secondary function in the conversion of the identified subglutinols to subglutinol analog 45, which seems to be the major product of the cluster. The protein is Polyprenyl transferase subC of Metarhizium robertsii (strain ARSEF 23 / ATCC MYA-3075) (Metarhizium anisopliae (strain ARSEF 23)).